The following is a 139-amino-acid chain: Protein archease (139 aa).

3 residues coordinate Ca(2+): Asp12, Asp138, and Ile139.

Belongs to the archease family.

Its function is as follows. Activates the tRNA-splicing ligase complex by facilitating the enzymatic turnover of catalytic subunit RtcB. Acts by promoting the guanylylation of RtcB, a key intermediate step in tRNA ligation. Can also alter the NTP specificity of RtcB such that ATP, dGTP or ITP is used efficiently. The polypeptide is Protein archease (Saccharolobus islandicus (strain Y.N.15.51 / Yellowstone #2) (Sulfolobus islandicus)).